A 104-amino-acid polypeptide reads, in one-letter code: Thioredoxin 1 (104 aa).

Residues 2–104 (VKIVTSQAEF…LKQLIEKYAA (103 aa)) enclose the Thioredoxin domain. Catalysis depends on nucleophile residues Cys30 and Cys33. Cys30 and Cys33 are oxidised to a cystine.

It belongs to the thioredoxin family. In terms of processing, the disulfide bond between Cys-30 and Cys-33 acts as a redox-active center and is reduced by thioredoxin reductase TRXR.

Its subcellular location is the cytoplasm. Functionally, participates in various redox reactions through the reversible oxidation of its active center dithiol to a disulfide and catalyzes dithiol-disulfide exchange reactions. By modifying the redox status of targeted proteins, induces changes in their structure and activity. Reduces oxidized glutathione (GSSG), thereby acting as a backup for the glutathione redox system. Reduces nitroglutathione (GSNO), a compound involved in the transport of nitric oxide (NO). Also reduces oxidative stress by detoxifying hydrogen peroxide, tert-butyl hydroperoxide and cumene hydroperoxide. Activates ornithine aminotransferase OAT by reducing a disulfide bond in the substrate binding loop, thereby enhancing the affinity of OAT for its substrates. May reduce S-adenosyl-L-homocysteine hydrolase SAHH. The chain is Thioredoxin 1 from Plasmodium falciparum (isolate 3D7).